We begin with the raw amino-acid sequence, 678 residues long: MPSATPEIKQRVDQLRSQLQKASYAYYVLDNPIMEDVVYDQLYRELQNIETQYPELITPDSPTQRVGDKLSEQFISVNHNIPLYSLENAFNLQEFARWQERWQRLTPDVTQFEYVCELKIDGSAIALTYENGLLVRGVTRGDGIVGEEITPNIKTIRSIPLKLALDNPPVRIEVRGEAFLPIEEFERINQEKQTAGESLFANPRNAAAGTLRQLDPRIVDRRRLQFFAYTLYVIDSPSTPTTQWESLEDLQQMGFLVNPNRKLCQSEAEVDQYYQLWDTERHNLPYMTDGVVVKLNDYQLQQQLGFTQKFPRWAIALKYPAEEAPTQVKNITVNVGRTGAVTPMAIMEPVQLAGTTVQKATLHNSDRVAQLDIRVGDTVIIRKAGEIIPEVVRVIEELRPPNTQPYQMPTQCPECHSTLVRPKGEAVTRCVNSSCPAILRGSLVHWCSRDALDIRGLGEKVVILLIDNGLVHSIADLYHLKVEQIASLERMGTKSANNLINAINKSKQQPWSRVLYGLGIRYVGSVTAKLLSDNFKSVEQLSQASFTSLESVYGIGAEIAQSVYDWFKIEANQTLIKNLQQAELQFETLSETPKYPPISSTPLAGKTVVITGTLPSLKRNEAQELIEKAGGKVTNSVSSKTDYLLVGEDAGSKLTKAQQLGISQLSEEQLLKMINPQE.

NAD(+) is bound by residues 36–40 (DVVYD), 85–86 (SL), and Glu-117. The N6-AMP-lysine intermediate role is filled by Lys-119. The NAD(+) site is built by Arg-140, Glu-177, Lys-294, and Lys-318. Zn(2+)-binding residues include Cys-412, Cys-415, Cys-430, and Cys-435. The region spanning 598–678 (ISSTPLAGKT…QLLKMINPQE (81 aa)) is the BRCT domain.

This sequence belongs to the NAD-dependent DNA ligase family. LigA subfamily. Mg(2+) is required as a cofactor. Mn(2+) serves as cofactor.

It carries out the reaction NAD(+) + (deoxyribonucleotide)n-3'-hydroxyl + 5'-phospho-(deoxyribonucleotide)m = (deoxyribonucleotide)n+m + AMP + beta-nicotinamide D-nucleotide.. Its function is as follows. DNA ligase that catalyzes the formation of phosphodiester linkages between 5'-phosphoryl and 3'-hydroxyl groups in double-stranded DNA using NAD as a coenzyme and as the energy source for the reaction. It is essential for DNA replication and repair of damaged DNA. This Gloeothece citriformis (strain PCC 7424) (Cyanothece sp. (strain PCC 7424)) protein is DNA ligase.